The primary structure comprises 457 residues: Methylenetetrahydrofolate--tRNA-(uracil-5-)-methyltransferase TrmFO (457 aa).

FAD is bound at residue glycine 7–glycine 12. The segment at phenylalanine 38–arginine 58 is disordered. Over residues serine 40 to arginine 52 the composition is skewed to basic and acidic residues.

It belongs to the MnmG family. TrmFO subfamily. It depends on FAD as a cofactor.

The protein localises to the cytoplasm. It catalyses the reaction uridine(54) in tRNA + (6R)-5,10-methylene-5,6,7,8-tetrahydrofolate + NADH + H(+) = 5-methyluridine(54) in tRNA + (6S)-5,6,7,8-tetrahydrofolate + NAD(+). It carries out the reaction uridine(54) in tRNA + (6R)-5,10-methylene-5,6,7,8-tetrahydrofolate + NADPH + H(+) = 5-methyluridine(54) in tRNA + (6S)-5,6,7,8-tetrahydrofolate + NADP(+). Its function is as follows. Catalyzes the folate-dependent formation of 5-methyl-uridine at position 54 (M-5-U54) in all tRNAs. The sequence is that of Methylenetetrahydrofolate--tRNA-(uracil-5-)-methyltransferase TrmFO from Hydrogenobaculum sp. (strain Y04AAS1).